The primary structure comprises 317 residues: Ceramide reductase (317 aa).

The signal sequence occupies residues 1 to 27; it reads MATDARGVVAITGATGFLGRHLVRALA.

It belongs to the NAD(P)-dependent epimerase/dehydratase family.

Its subcellular location is the periplasm. The catalysed reaction is N-acyl-3-oxosphinganine + NADH + H(+) = an N-acylsphinganine + NAD(+). It participates in lipid metabolism; sphingolipid metabolism. Involved in de novo bacterial ceramide synthesis. Catalyzes the reduction of bacterial oxidized ceramides to bacterial dihydroceramides. This is Ceramide reductase from Caulobacter vibrioides (strain NA1000 / CB15N) (Caulobacter crescentus).